Here is a 239-residue protein sequence, read N- to C-terminus: Ribosomal RNA small subunit methyltransferase G (239 aa).

Residues Gly-77, Phe-82, 128–129 (AE), and Arg-146 contribute to the S-adenosyl-L-methionine site. The tract at residues 216–239 (KRRQTSKKYPRKPGTPNKSPLVES) is disordered.

It belongs to the methyltransferase superfamily. RNA methyltransferase RsmG family.

It is found in the cytoplasm. Specifically methylates the N7 position of guanine in position 535 of 16S rRNA. The sequence is that of Ribosomal RNA small subunit methyltransferase G from Staphylococcus epidermidis (strain ATCC 35984 / DSM 28319 / BCRC 17069 / CCUG 31568 / BM 3577 / RP62A).